The chain runs to 446 residues: Transcriptional regulator STERILE APETALA (446 aa).

A compositionally biased stretch (low complexity) spans 1 to 10; that stretch reads MSTSSSSSDN. The segment at 1–32 is disordered; it reads MSTSSSSSDNGAGGSGGVFEAPSPSRPRRGAN.

In terms of tissue distribution, expressed in inflorescence and floral meristems, young floral organ primordia, and later in ovule primordia.

It localises to the nucleus. Its function is as follows. Transcriptional regulator involved in the specification of floral identity. Acts as A class cadastral protein by repressing the C class floral homeotic gene AGAMOUS in the external flower organs in association with APETALA2 and other repressors. Is required to maintain floral meristem identity in concert with AGAMOUS. Also interacts with APETALA2 to ensure the normal development of ovule. This chain is Transcriptional regulator STERILE APETALA (SAP), found in Arabidopsis thaliana (Mouse-ear cress).